Here is a 1290-residue protein sequence, read N- to C-terminus: Alpha-amylase (1290 aa).

The signal sequence occupies residues 1-31; that stretch reads MTRKTRYLHQITTLILGGLLIVPAAAPPVSA. E231 serves as the catalytic Nucleophile. D373 (proton donor) is an active-site residue. One can recognise a Fibronectin type-III domain in the interval 817-902; that stretch reads VPANLQATVM…AAATATTPAG (86 aa). Positions 902 to 978 are CBM25; it reads GNHVTVYYKQ…SNGGSNYLFG (77 aa). 2 stretches are compositionally biased toward low complexity: residues 994–1008 and 1016–1031; these read APVA…APTA and VTPT…VAPT. Residues 994–1037 are disordered; it reads APVAPSATPTVAPTATPTPKPSVTPTVTPITTPTVAPTLSPTPT. The tract at residues 1092-1171 is CBM25; sequence GNSATIYYKN…NGGSNYHFGT (80 aa). The 107-residue stretch at 1183–1289 folds into the CBM20 domain; that stretch reads TGEPQADSVT…VTLTVQRWKD (107 aa).

Belongs to the glycosyl hydrolase 119 (GH119) family.

It is found in the secreted. It catalyses the reaction Endohydrolysis of (1-&gt;4)-alpha-D-glucosidic linkages in polysaccharides containing three or more (1-&gt;4)-alpha-linked D-glucose units.. Acts on maltooligosaccharides that have a degree of polymerization (DP) of 4 or more, amylose, and soluble or raw starch to produce glucose and maltooligosaccharides up to DP5 by a hydrolysis reaction. Also acts on maltooligosyl trehaloses that have DP5 or more to produce trehalose as the major hydrolysis product. This chain is Alpha-amylase, found in Niallia circulans (Bacillus circulans).